The following is a 162-amino-acid chain: Ribonuclease H (162 aa).

The RNase H type-1 domain maps to 6-154; it reads DMKRVEIFTD…ADRLANQGVE (149 aa). Mg(2+) contacts are provided by Asp-15, Glu-53, Asp-82, and Asp-146.

It belongs to the RNase H family. Monomer. It depends on Mg(2+) as a cofactor.

The protein localises to the cytoplasm. It catalyses the reaction Endonucleolytic cleavage to 5'-phosphomonoester.. Endonuclease that specifically degrades the RNA of RNA-DNA hybrids. The polypeptide is Ribonuclease H (Nitrosomonas eutropha (strain DSM 101675 / C91 / Nm57)).